The primary structure comprises 147 residues: Pathogenesis-related protein PR-4A (147 aa).

A signal peptide spans 1–25 (MERVNNYKLCVALLIISMVMAMAAA). The region spanning 26–147 (QSATNVRSTY…VNYEFVNCND (122 aa)) is the Barwin domain. Intrachain disulfides connect Cys-54/Cys-86, Cys-75/Cys-109, and Cys-89/Cys-145.

It localises to the secreted. The protein resides in the cell wall. The polypeptide is Pathogenesis-related protein PR-4A (Nicotiana tabacum (Common tobacco)).